The chain runs to 355 residues: uncharacterized protein (355 aa).

The protein belongs to the ycf89 family.

The protein localises to the plastid. It is found in the chloroplast. This is an uncharacterized protein from Trieres chinensis (Marine centric diatom).